A 92-amino-acid polypeptide reads, in one-letter code: Acylphosphatase (92 aa).

Cys-5 and Cys-49 form a disulfide bridge. The 88-residue stretch at 5 to 92 (CIIAWVYGRV…SGELTDFRIR (88 aa)) folds into the Acylphosphatase-like domain. Active-site residues include Arg-20 and Asn-38.

This sequence belongs to the acylphosphatase family.

The enzyme catalyses an acyl phosphate + H2O = a carboxylate + phosphate + H(+). The sequence is that of Acylphosphatase from Escherichia coli O157:H7.